Here is a 173-residue protein sequence, read N- to C-terminus: NADH-quinone oxidoreductase subunit I 1 (173 aa).

4Fe-4S ferredoxin-type domains are found at residues 41 to 73 and 83 to 112; these read IVLTRDPDGQERCVACNLCAVACPVGCIDLAKA and EHFRINFARCIFCGYCEEACPTAAIQLTPD. C53, C56, C59, C63, C92, C95, C98, and C102 together coordinate [4Fe-4S] cluster.

The protein belongs to the complex I 23 kDa subunit family. In terms of assembly, NDH-1 is composed of 14 different subunits. Subunits NuoA, H, J, K, L, M, N constitute the membrane sector of the complex. It depends on [4Fe-4S] cluster as a cofactor.

The protein resides in the cell inner membrane. It catalyses the reaction a quinone + NADH + 5 H(+)(in) = a quinol + NAD(+) + 4 H(+)(out). NDH-1 shuttles electrons from NADH, via FMN and iron-sulfur (Fe-S) centers, to quinones in the respiratory chain. The immediate electron acceptor for the enzyme in this species is believed to be ubiquinone. Couples the redox reaction to proton translocation (for every two electrons transferred, four hydrogen ions are translocated across the cytoplasmic membrane), and thus conserves the redox energy in a proton gradient. The sequence is that of NADH-quinone oxidoreductase subunit I 1 from Rhodopseudomonas palustris (strain BisA53).